Consider the following 879-residue polypeptide: DNA mismatch repair protein MutS (879 aa).

Residue 629 to 636 (GPNMAGKS) coordinates ATP. The segment at 824–845 (VGGQPQKELSEHKPHQPSLFAP) is disordered.

Belongs to the DNA mismatch repair MutS family.

Its function is as follows. This protein is involved in the repair of mismatches in DNA. It is possible that it carries out the mismatch recognition step. This protein has a weak ATPase activity. In Desulfotalea psychrophila (strain LSv54 / DSM 12343), this protein is DNA mismatch repair protein MutS.